We begin with the raw amino-acid sequence, 314 residues long: NAC domain-containing protein 10 (314 aa).

The span at V18–R39 shows a compositional bias: polar residues. Disordered regions lie at residues V18 to T48 and Y150 to S182. An NAC domain is found at L77–Q236. The segment covering V160 to W171 has biased composition (basic and acidic residues). The DNA-binding element occupies T187–C242.

As to expression, expressed in protoxylem and elongating interfascicular fiber cells of elongating internodes, developing metaxylem cells and interfascicular fibers of non-elongating internodes and developing secondary xylem of roots.

It is found in the nucleus. In terms of biological role, transcriptional activator that plays a regulatory role in the development of secondary cell wall fibers. Is a direct target of SND1. This Arabidopsis thaliana (Mouse-ear cress) protein is NAC domain-containing protein 10.